The chain runs to 443 residues: UDP-N-acetylmuramate--L-alanine ligase (443 aa).

111-117 provides a ligand contact to ATP; that stretch reads GAHGKTS.

This sequence belongs to the MurCDEF family.

It is found in the cytoplasm. The enzyme catalyses UDP-N-acetyl-alpha-D-muramate + L-alanine + ATP = UDP-N-acetyl-alpha-D-muramoyl-L-alanine + ADP + phosphate + H(+). It participates in cell wall biogenesis; peptidoglycan biosynthesis. Its function is as follows. Cell wall formation. The sequence is that of UDP-N-acetylmuramate--L-alanine ligase from Levilactobacillus brevis (strain ATCC 367 / BCRC 12310 / CIP 105137 / JCM 1170 / LMG 11437 / NCIMB 947 / NCTC 947) (Lactobacillus brevis).